The sequence spans 364 residues: Aminomethyltransferase (364 aa).

The protein belongs to the GcvT family. As to quaternary structure, the glycine cleavage system is composed of four proteins: P, T, L and H.

The catalysed reaction is N(6)-[(R)-S(8)-aminomethyldihydrolipoyl]-L-lysyl-[protein] + (6S)-5,6,7,8-tetrahydrofolate = N(6)-[(R)-dihydrolipoyl]-L-lysyl-[protein] + (6R)-5,10-methylene-5,6,7,8-tetrahydrofolate + NH4(+). Functionally, the glycine cleavage system catalyzes the degradation of glycine. The chain is Aminomethyltransferase from Staphylococcus carnosus (strain TM300).